Here is a 385-residue protein sequence, read N- to C-terminus: 1-deoxy-D-xylulose 5-phosphate reductoisomerase (385 aa).

NADPH contacts are provided by Thr-10, Gly-11, Ser-12, Ile-13, Lys-37, and Asn-124. Lys-125 lines the 1-deoxy-D-xylulose 5-phosphate pocket. Glu-126 provides a ligand contact to NADPH. Asp-150 is a binding site for Mn(2+). 1-deoxy-D-xylulose 5-phosphate contacts are provided by Ser-151, Glu-152, Ser-176, and His-199. Residue Glu-152 participates in Mn(2+) binding. An NADPH-binding site is contributed by Gly-205. 1-deoxy-D-xylulose 5-phosphate contacts are provided by Ser-212, Asn-217, Lys-218, and Glu-221. Residue Glu-221 participates in Mn(2+) binding.

The protein belongs to the DXR family. Requires Mg(2+) as cofactor. It depends on Mn(2+) as a cofactor.

It carries out the reaction 2-C-methyl-D-erythritol 4-phosphate + NADP(+) = 1-deoxy-D-xylulose 5-phosphate + NADPH + H(+). The protein operates within isoprenoid biosynthesis; isopentenyl diphosphate biosynthesis via DXP pathway; isopentenyl diphosphate from 1-deoxy-D-xylulose 5-phosphate: step 1/6. Its function is as follows. Catalyzes the NADPH-dependent rearrangement and reduction of 1-deoxy-D-xylulose-5-phosphate (DXP) to 2-C-methyl-D-erythritol 4-phosphate (MEP). The sequence is that of 1-deoxy-D-xylulose 5-phosphate reductoisomerase from Clostridium botulinum (strain Kyoto / Type A2).